A 257-amino-acid chain; its full sequence is Transmembrane protein C257L (257 aa).

The next 2 helical transmembrane spans lie at 123–143 and 163–183; these read LELL…FTAL and MMIF…YVLV.

Belongs to the asfivirus C257R family.

Its subcellular location is the host membrane. It localises to the virion. The chain is Transmembrane protein C257L from African swine fever virus (isolate Tick/South Africa/Pretoriuskop Pr4/1996) (ASFV).